Here is a 302-residue protein sequence, read N- to C-terminus: Oxygen-dependent coproporphyrinogen-III oxidase (302 aa).

S94 is a binding site for substrate. 2 residues coordinate a divalent metal cation: H98 and H108. The Proton donor role is filled by H108. Residue 110–112 (NVR) participates in substrate binding. H147 and H177 together coordinate a divalent metal cation. The important for dimerization stretch occupies residues 242–277 (YVEFNLVFDRGTLFGLQSGGRTESILMSMPPVANWR). Substrate is bound at residue 260–262 (GGR).

Belongs to the aerobic coproporphyrinogen-III oxidase family. Homodimer. Requires a divalent metal cation as cofactor.

It is found in the cytoplasm. It carries out the reaction coproporphyrinogen III + O2 + 2 H(+) = protoporphyrinogen IX + 2 CO2 + 2 H2O. It participates in porphyrin-containing compound metabolism; protoporphyrin-IX biosynthesis; protoporphyrinogen-IX from coproporphyrinogen-III (O2 route): step 1/1. Functionally, involved in the heme biosynthesis. Catalyzes the aerobic oxidative decarboxylation of propionate groups of rings A and B of coproporphyrinogen-III to yield the vinyl groups in protoporphyrinogen-IX. This is Oxygen-dependent coproporphyrinogen-III oxidase from Ralstonia nicotianae (strain ATCC BAA-1114 / GMI1000) (Ralstonia solanacearum).